The sequence spans 224 residues: Putative homeobox protein R749 (224 aa).

The disordered stretch occupies residues 139–162 (KTKTIKKSTSEKKTSPKKKTTSQQ). The homeobox DNA-binding region spans 161–220 (QQIKRVRLSDEERNILESQYSKNNFPSPEIRDELAKKIGKTPRQVQIWFQNKRCKDRKNL).

It localises to the host nucleus. This chain is Putative homeobox protein R749, found in Acanthamoeba polyphaga mimivirus (APMV).